A 391-amino-acid polypeptide reads, in one-letter code: Arsenite methyltransferase (391 aa).

The segment at 1–126 (MELWTHPTPA…TMVADRDPEE (126 aa)) is disordered. The segment covering 28–39 (CSQPWATTPGTN) has biased composition (polar residues). Residues 40–65 (SSDASRTPTTASASATSKPQSASARA) are compositionally biased toward low complexity. The span at 102–116 (KRSTTCEATMSNDNE) shows a compositional bias: polar residues.

Belongs to the methyltransferase superfamily. Arsenite methyltransferase family.

It catalyses the reaction arsenic triglutathione + [thioredoxin]-dithiol + S-adenosyl-L-methionine + 2 H2O = methylarsonous acid + [thioredoxin]-disulfide + 3 glutathione + S-adenosyl-L-homocysteine + H(+). The catalysed reaction is arsenic triglutathione + 2 [thioredoxin]-dithiol + 2 S-adenosyl-L-methionine + H2O = dimethylarsinous acid + 2 [thioredoxin]-disulfide + 3 glutathione + 2 S-adenosyl-L-homocysteine + 2 H(+). It carries out the reaction arsenic triglutathione + 3 [thioredoxin]-dithiol + 3 S-adenosyl-L-methionine = trimethylarsine + 3 [thioredoxin]-disulfide + 3 glutathione + 3 S-adenosyl-L-homocysteine + 3 H(+). In terms of biological role, catalyzes the transfer of a methyl group from AdoMet to arsenite, producing methylated arsenicals. This is Arsenite methyltransferase from Halobacterium salinarum (strain ATCC 700922 / JCM 11081 / NRC-1) (Halobacterium halobium).